The primary structure comprises 474 residues: Probable periplasmic serine endoprotease DegP-like (474 aa).

The N-terminal stretch at 1 to 25 (MRNLKSVTPLLMAALLWGQSLLAQA) is a signal peptide. Active-site charge relay system residues include histidine 113, aspartate 143, and serine 216. Residues 214-216 (GNS) and 271-275 (LGVVI) each bind substrate. PDZ domains are found at residues 260 to 351 (LKAD…VRDG) and 357 to 463 (KVTI…LRQG).

It belongs to the peptidase S1C family.

It localises to the periplasm. The enzyme catalyses Acts on substrates that are at least partially unfolded. The cleavage site P1 residue is normally between a pair of hydrophobic residues, such as Val-|-Val.. In terms of biological role, might be efficient in the degradation of transiently denatured and unfolded proteins which accumulate in the periplasm following stress conditions. The sequence is that of Probable periplasmic serine endoprotease DegP-like from Ectopseudomonas mendocina (strain ymp) (Pseudomonas mendocina).